Reading from the N-terminus, the 243-residue chain is Adenosine 5'-phosphosulfate reductase (243 aa).

Cys-126, Cys-127, Cys-209, and Cys-212 together coordinate [4Fe-4S] cluster. The active-site Nucleophile; cysteine thiosulfonate intermediate is the Cys-235.

This sequence belongs to the PAPS reductase family. CysH subfamily. [4Fe-4S] cluster serves as cofactor.

The protein resides in the cytoplasm. The enzyme catalyses [thioredoxin]-disulfide + sulfite + AMP + 2 H(+) = adenosine 5'-phosphosulfate + [thioredoxin]-dithiol. It functions in the pathway sulfur metabolism; hydrogen sulfide biosynthesis; sulfite from sulfate. Functionally, catalyzes the formation of sulfite from adenosine 5'-phosphosulfate (APS) using thioredoxin as an electron donor. This is Adenosine 5'-phosphosulfate reductase from Staphylococcus epidermidis (strain ATCC 12228 / FDA PCI 1200).